Here is a 361-residue protein sequence, read N- to C-terminus: tRNA-specific 2-thiouridylase MnmA (361 aa).

ATP-binding positions include 6 to 13 (LVSGGVDS) and Ile-32. An interaction with target base in tRNA region spans residues 93-95 (NPD). Cys-98 functions as the Nucleophile in the catalytic mechanism. A disulfide bond links Cys-98 and Cys-193. Gly-121 is an ATP binding site. The interaction with tRNA stretch occupies residues 143 to 145 (KDQ). Cys-193 acts as the Cysteine persulfide intermediate in catalysis.

It belongs to the MnmA/TRMU family.

It is found in the cytoplasm. The enzyme catalyses S-sulfanyl-L-cysteinyl-[protein] + uridine(34) in tRNA + AH2 + ATP = 2-thiouridine(34) in tRNA + L-cysteinyl-[protein] + A + AMP + diphosphate + H(+). Catalyzes the 2-thiolation of uridine at the wobble position (U34) of tRNA, leading to the formation of s(2)U34. The protein is tRNA-specific 2-thiouridylase MnmA of Porphyromonas gingivalis (strain ATCC 33277 / DSM 20709 / CIP 103683 / JCM 12257 / NCTC 11834 / 2561).